We begin with the raw amino-acid sequence, 151 residues long: S-ribosylhomocysteine lyase (151 aa).

Fe cation is bound by residues His54, His58, and Cys121.

Belongs to the LuxS family. Homodimer. Fe cation is required as a cofactor.

It carries out the reaction S-(5-deoxy-D-ribos-5-yl)-L-homocysteine = (S)-4,5-dihydroxypentane-2,3-dione + L-homocysteine. In terms of biological role, involved in the synthesis of autoinducer 2 (AI-2) which is secreted by bacteria and is used to communicate both the cell density and the metabolic potential of the environment. The regulation of gene expression in response to changes in cell density is called quorum sensing. Catalyzes the transformation of S-ribosylhomocysteine (RHC) to homocysteine (HC) and 4,5-dihydroxy-2,3-pentadione (DPD). The sequence is that of S-ribosylhomocysteine lyase from Clostridium perfringens (strain ATCC 13124 / DSM 756 / JCM 1290 / NCIMB 6125 / NCTC 8237 / Type A).